Reading from the N-terminus, the 1721-residue chain is Latent-transforming growth factor beta-binding protein 1 (1721 aa).

The first 23 residues, 1–23 (MAGAWLRWGLLLWAGLLASSAHG), serve as a signal peptide directing secretion. Residues 64-81 (RSSAAAGAPSRASPGVPS) show a composition bias toward low complexity. The segment at 64 to 158 (RSSAAAGAPS…SGGGSRLQVH (95 aa)) is disordered. Pro residues predominate over residues 99–111 (RPPPPPPPEPARP). Low complexity predominate over residues 112–130 (AVPGGQLHPNPGGHPAAAP). One can recognise an EGF-like 1 domain in the interval 187–219 (TKPSCVPPCQNGGMCLRPQLCVCKPGTKGKACE). 3 disulfide bridges follow: C191–C201, C195–C207, and C209–C218. The segment at 228–259 (SPVFGGQSPGAASSWGPPEQAAKHTSSKKADT) is disordered. Residues N347 and N378 are each glycosylated (N-linked (GlcNAc...) asparagine). Residues 399-431 (RVVICHLPCMNGGQCSSRDKCQCPPNFTGKLCQ) enclose the EGF-like 2 domain. Disulfide bonds link C403/C413, C407/C419, C421/C430, C559/C581, C568/C594, and C582/C597. N-linked (GlcNAc...) asparagine glycosylation is present at N424. One can recognise a TB 1 domain in the interval 557 to 609 (GRCFQETIGSQCGKALPGLSKQEDCCGTVGTSWGFNKCQKCPKKPSYHGYNQM). N-linked (GlcNAc...) asparagine glycosylation occurs at N620. Positions 626–663 (DINECQLQGVCPNGECLNTMGSYRCTCKIGFGPDPTFS) constitute an EGF-like 3; calcium-binding domain. 7 cysteine pairs are disulfide-bonded: C630–C641, C636–C650, C652–C665, C679–C702, C689–C714, C703–C717, and C704–C729. O-linked (Glc) serine glycosylation is present at S647. The 53-residue stretch at 677–729 (GPCYRLVSSGRQCMHPLSVHLTKQLCCCSVGKAWGPHCEKCPLPGTAAFKEIC) folds into the TB 2 domain. The tract at residues 750–811 (VGKGPVFVKP…APPEKEIPSL (62 aa)) is disordered. T769 and T801 each carry an O-linked (GalNAc...) threonine glycan. One can recognise an EGF-like 4; calcium-binding domain in the interval 873–910 (EINECTVNPDICGAGHCINLPVRYTCICYEGYRFSEQQ). Intrachain disulfides connect C877/C889, C884/C898, C900/C913, C919/C931, C926/C940, C942/C955, C961/C972, C967/C981, C984/C996, C1002/C1013, C1008/C1022, C1025/C1036, C1042/C1053, C1048/C1062, C1064/C1077, C1083/C1094, C1089/C1103, C1105/C1118, C1124/C1135, C1130/C1144, C1146/C1159, C1165/C1177, C1172/C1186, C1188/C1200, C1206/C1218, C1212/C1227, C1229/C1242, C1248/C1260, and C1254/C1269. An EGF-like 5; calcium-binding domain is found at 915–956 (DIDECTQVQHLCSQGRCENTEGSFLCICPAGFMASEEGTNCI). The O-linked (Glc) serine glycan is linked to S937. In terms of domain architecture, EGF-like 6; calcium-binding spans 957–997 (DVDECLRPDVCGEGHCVNTVGAFRCEYCDSGYRMTQRGRCE). N974 is subject to (3R)-3-hydroxyasparagine. An EGF-like 7; calcium-binding domain is found at 998–1037 (DIDECLNPSTCPDEQCVNSPGSYQCVPCTEGFRGWNGQCL). A glycan (O-linked (Glc) serine) is linked at S1019. Residues 1038 to 1078 (DVDECLEPNVCANGDCSNLEGSYMCSCHKGYTRTPDHKHCR) enclose the EGF-like 8; calcium-binding domain. The O-linked (Glc) serine glycan is linked to S1059. The EGF-like 9; calcium-binding domain occupies 1079 to 1119 (DIDECQQGNLCVNGQCKNTEGSFRCTCGQGYQLSAAKDQCE). The 41-residue stretch at 1120–1160 (DIDECQHRHLCAHGQCRNTEGSFQCVCDQGYRASGLGDHCE) folds into the EGF-like 10; calcium-binding domain. N1137 is modified ((3R)-3-hydroxyasparagine). O-linked (Glc) serine glycosylation occurs at S1141. An EGF-like 11; calcium-binding domain is found at 1161-1201 (DINECLEDKSVCQRGDCINTAGSYDCTCPDGFQLDDNKTCQ). The Cell attachment site signature appears at 1174 to 1176 (RGD). N-linked (GlcNAc...) asparagine glycosylation occurs at N1197. An EGF-like 12; calcium-binding domain is found at 1202 to 1243 (DINECEHPGLCGPQGECLNTEGSFHCVCQQGFSISADGRTCE). Residue S1224 is glycosylated (O-linked (Glc) serine). One can recognise an EGF-like 13; calcium-binding domain in the interval 1244–1281 (DIDECVNNTVCDSHGFCDNTAGSFRCLCYQGFQAPQDG). An N-linked (GlcNAc...) asparagine glycan is attached at N1250. Positions 1286–1328 (DVNECELLSGVCGEAFCENVEGSFLCVCADENQEYSPMTGQCR) constitute an EGF-like 14; calcium-binding domain. The segment at 1344 to 1411 (EEKKECYYNL…PKGKGFVPAG (68 aa)) is 8-Cys3 region. The TB 3 domain occupies 1347 to 1401 (KECYYNLNDASLCDNVLAPNVTKQECCCTSGVGWGDNCEIFPCPVLGTAEFTEMC). Cystine bridges form between C1349/C1372, C1359/C1384, C1373/C1389, and C1374/C1401. N-linked (GlcNAc...) asparagine glycosylation is present at N1366. S1414 carries the phosphoserine; by FAM20C modification. The EGF-like 15; calcium-binding domain occupies 1424 to 1466 (DADECLLFGQEICKNGFCLNTRPGYECYCKQGTYYDPVKLQCF). The EGF-like 16; calcium-binding domain maps to 1467–1503 (DMDECQDPSSCIDGQCVNTEGSYNCFCTHPMVLDASE). 6 cysteine pairs are disulfide-bonded: C1471/C1482, C1477/C1491, C1526/C1550, C1536/C1562, C1551/C1565, and C1552/C1577. S1488 carries an O-linked (Glc) serine glycan. The C-terminal domain stretch occupies residues 1507-1721 (IRPAESNEQI…LNLEKDSDLE (215 aa)). The TB 4 domain occupies 1524-1577 (DLCWEHLSDEYVCSRPLVGKQTTYTECCCLYGEAWGMQCALCPLKDSDDYAQLC). 2 positions are modified to phosphoserine: S1597 and S1616. The region spanning 1621–1657 (QAEECGILNGCENGRCVRVQEGYTCDCFDGYHLDTAK) is the EGF-like 17 domain. 5 disulfides stabilise this stretch: C1625–C1636, C1631–C1645, C1666–C1681, C1676–C1690, and C1692–C1705. Residues 1662-1706 (DVNECDELNNRMSLCKNAKCINTDGSYKCLCLPGYVPSDKPNYCT) form the EGF-like 18; calcium-binding domain. The O-linked (Glc) serine glycan is linked to S1687.

This sequence belongs to the LTBP family. Interacts with TGFB1; associates via disulfide bonds with the Latency-associated peptide chain (LAP) regulatory chain of TGFB1, leading to regulate activation of TGF-beta-1. LTBP1 does not bind directly to TGF-beta-1, the active chain of TGFB1. Interacts (via C-terminal domain) with FBN1 (via N-terminal domain). Interacts with FBN2. Interacts with ADAMTSL2. Interacts with EFEMP2. Post-translationally, contains hydroxylated asparagine residues. Isoform Short N-terminus is blocked. In terms of processing, two intrachain disulfide bonds from the TB3 domain are rearranged upon TGFB1 binding, and form interchain bonds with TGFB1 propeptide, anchoring it to the extracellular matrix. Post-translationally, O-glycosylated on serine residues by POGLUT2 and POGLUT3. In terms of tissue distribution, expressed in the aorta (at protein level). Isoform Long: Expressed in fibroblasts.

The protein resides in the secreted. It localises to the extracellular space. Its subcellular location is the extracellular matrix. Functionally, key regulator of transforming growth factor beta (TGFB1, TGFB2 and TGFB3) that controls TGF-beta activation by maintaining it in a latent state during storage in extracellular space. Associates specifically via disulfide bonds with the Latency-associated peptide (LAP), which is the regulatory chain of TGF-beta, and regulates integrin-dependent activation of TGF-beta. Outcompeted by LRRC32/GARP for binding to LAP regulatory chain of TGF-beta. The protein is Latent-transforming growth factor beta-binding protein 1 of Homo sapiens (Human).